Consider the following 98-residue polypeptide: Small ribosomal subunit protein bS18 (98 aa).

It belongs to the bacterial ribosomal protein bS18 family. In terms of assembly, part of the 30S ribosomal subunit. Forms a tight heterodimer with protein bS6.

Its function is as follows. Binds as a heterodimer with protein bS6 to the central domain of the 16S rRNA, where it helps stabilize the platform of the 30S subunit. The polypeptide is Small ribosomal subunit protein bS18 (Flavobacterium psychrophilum (strain ATCC 49511 / DSM 21280 / CIP 103535 / JIP02/86)).